A 134-amino-acid polypeptide reads, in one-letter code: MTGGKSGGKASGSKNAQSRSSKAGLAFPVGRVHRLLRKGNYAQRVGAGAPVYLAAVLEYLAAEILELAGNAARDNKKTRIIPRHLQLAIRNDEELNKLLGHVTIAQGGVLPNIHQNLLPKKTPKSGKGPGSQEL.

Positions 1-10 are enriched in gly residues; that stretch reads MTGGKSGGKA. Residues 1-24 are disordered; that stretch reads MTGGKSGGKASGSKNAQSRSSKAG. Lysine 5 and lysine 9 each carry N6-acetyllysine. The residue at position 106 (glutamine 106) is an N5-methylglutamine. The tract at residues 115-134 is disordered; it reads QNLLPKKTPKSGKGPGSQEL. A Phosphoserine modification is found at serine 131. The short motif at 131-132 is the [ST]-Q motif element; it reads SQ.

This sequence belongs to the histone H2A family. In terms of assembly, the nucleosome is a histone octamer containing two molecules each of H2A, H2B, H3 and H4 assembled in one H3-H4 heterotetramer and two H2A-H2B heterodimers. The octamer wraps approximately 147 bp of DNA. Phosphorylated to form H2AS128ph (gamma-H2A) in response to DNA double-strand breaks (DSBs) generated by exogenous genotoxic agents and by stalled replication forks. Phosphorylation is dependent on the DNA damage checkpoint kinases mec1/ATR and tel1/ATM, spreads on either side of a detected DSB site and may mark the surrounding chromatin for recruitment of proteins required for DNA damage signaling and repair. Gamma-H2A is removed from the DNA prior to the strand invasion-primer extension step of the repair process and subsequently dephosphorylated. Dephosphorylation is necessary for efficient recovery from the DNA damage checkpoint. In terms of processing, acetylated by esa1 to form H2AK4ac and H2AK7ac.

The protein resides in the nucleus. The protein localises to the chromosome. Core component of nucleosome which plays a central role in DNA double strand break (DSB) repair. Nucleosomes wrap and compact DNA into chromatin, limiting DNA accessibility to the cellular machineries which require DNA as a template. Histones thereby play a central role in transcription regulation, DNA repair, DNA replication and chromosomal stability. DNA accessibility is regulated via a complex set of post-translational modifications of histones, also called histone code, and nucleosome remodeling. This is Histone H2A (httA) from Aspergillus niger (strain ATCC MYA-4892 / CBS 513.88 / FGSC A1513).